The following is a 564-amino-acid chain: Oxalyl-CoA decarboxylase (564 aa).

Residues Ile32 and Tyr118 each coordinate substrate. ADP contacts are provided by Arg158 and Lys220. Residue Ala261–Ser265 coordinates substrate. 3 residues coordinate ADP: Arg280, Asp302, and Ile322. Asn355 is a substrate binding site. Thiamine diphosphate is bound by residues Tyr372 and Ala396 to Thr398. Arg403–Asn404 provides a ligand contact to substrate. Gly421–Met423 contacts thiamine diphosphate. Asp447 is a binding site for Mg(2+). A thiamine diphosphate-binding site is contributed by Ser448 to Ala449. 2 residues coordinate Mg(2+): Asn474 and Gly476. Thiamine diphosphate is bound at residue Tyr478. Ser550 to His552 is a substrate binding site.

Belongs to the TPP enzyme family. As to quaternary structure, homotetramer; dimer of dimers. It depends on Mg(2+) as a cofactor. The cofactor is thiamine diphosphate.

It catalyses the reaction oxalyl-CoA + H(+) = formyl-CoA + CO2. The protein operates within metabolic intermediate degradation; oxalate degradation; CO(2) and formate from oxalate: step 2/2. Functionally, involved in the catabolism of oxalate and in the adapatation to low pH via the induction of the oxalate-dependent acid tolerance response (ATR). Catalyzes the decarboxylation of oxalyl-CoA to yield carbon dioxide and formyl-CoA. This Escherichia coli O157:H7 protein is Oxalyl-CoA decarboxylase (oxc).